A 125-amino-acid chain; its full sequence is Synaptobrevin (125 aa).

The interval 1 to 46 is disordered; sequence MSGPQNPQAGPGGPPSGPPQPGGPPGPPQGPPQPVQQSKRLQQTQA. Residues 1–103 lie on the Cytoplasmic side of the membrane; that stretch reads MSGPQNPQAG…KRKFWWKNCK (103 aa). Residues 12-34 are compositionally biased toward pro residues; the sequence is GGPPSGPPQPGGPPGPPQGPPQP. The 61-residue stretch at 40–100 folds into the v-SNARE coiled-coil homology domain; that stretch reads RLQQTQAQVE…GKLKRKFWWK (61 aa). Residues 104–123 form a helical; Anchor for type IV membrane protein membrane-spanning segment; the sequence is MMIILGGIVAVIVTVIIVWA. Topologically, residues 124–125 are vesicular; that stretch reads AT.

This sequence belongs to the synaptobrevin family.

It is found in the cytoplasmic vesicle. Its subcellular location is the secretory vesicle. It localises to the synaptic vesicle membrane. The protein resides in the synapse. The protein localises to the synaptosome. Its function is as follows. Intrinsic membrane protein of small synaptic vesicles. The chain is Synaptobrevin from Doryteuthis pealeii (Longfin inshore squid).